Reading from the N-terminus, the 305-residue chain is Epoxyqueuosine reductase (305 aa).

Asp-128 (proton donor) is an active-site residue. Residues 170 to 202 (LSLTSDTPHAKYCGTCRKCLDICPTKAIVHPFV) enclose the 4Fe-4S ferredoxin-type domain. [4Fe-4S] cluster-binding residues include Cys-182, Cys-185, Cys-188, Cys-192, Cys-208, Cys-236, Cys-239, and Cys-243.

It belongs to the QueG family. In terms of assembly, monomer. Requires cob(II)alamin as cofactor. [4Fe-4S] cluster is required as a cofactor.

The protein resides in the cytoplasm. It catalyses the reaction epoxyqueuosine(34) in tRNA + AH2 = queuosine(34) in tRNA + A + H2O. It participates in tRNA modification; tRNA-queuosine biosynthesis. Catalyzes the conversion of epoxyqueuosine (oQ) to queuosine (Q), which is a hypermodified base found in the wobble positions of tRNA(Asp), tRNA(Asn), tRNA(His) and tRNA(Tyr). This is Epoxyqueuosine reductase from Atelocyanobacterium thalassa (isolate ALOHA).